A 90-amino-acid chain; its full sequence is Small ribosomal subunit protein uS17 (90 aa).

This sequence belongs to the universal ribosomal protein uS17 family. As to quaternary structure, part of the 30S ribosomal subunit.

One of the primary rRNA binding proteins, it binds specifically to the 5'-end of 16S ribosomal RNA. This is Small ribosomal subunit protein uS17 from Paraburkholderia phytofirmans (strain DSM 17436 / LMG 22146 / PsJN) (Burkholderia phytofirmans).